The following is a 752-amino-acid chain: Neuroendocrine convertase 1 (752 aa).

The first 27 residues, 1–27 (MKQRGWTLQCTAFTLFCVWCALNSVKA), serve as a signal peptide directing secretion. Residues 28–110 (KRQFVNEWAA…QQYEKERRKR (83 aa)) constitute a propeptide that is removed on maturation. The Peptidase S8 domain occupies 129–450 (QWYLQDTRMT…FGLLNAKALV (322 aa)). Residue Asp-167 is the Charge relay system of the active site. Asn-173 carries N-linked (GlcNAc...) asparagine glycosylation. Residue His-208 is the Charge relay system of the active site. 2 cysteine pairs are disulfide-bonded: Cys-225/Cys-374 and Cys-317/Cys-347. Ser-382 functions as the Charge relay system in the catalytic mechanism. Asn-401 carries N-linked (GlcNAc...) asparagine glycosylation. Positions 460–597 (NVPEKKECII…KLILHGTSSQ (138 aa)) constitute a P/Homo B domain. Cys-467 and Cys-494 are joined by a disulfide. A disordered region spans residues 631–662 (PTQNSLNGNLLVPKNSSSSSVEDRRDEQVQGA). The N-linked (GlcNAc...) asparagine glycan is linked to Asn-645.

This sequence belongs to the peptidase S8 family. Furin subfamily. Ca(2+) is required as a cofactor.

It localises to the cytoplasmic vesicle. It is found in the secretory vesicle. It carries out the reaction Release of protein hormones, neuropeptides and renin from their precursors, generally by hydrolysis of -Lys-Arg-|- bonds.. Its function is as follows. Involved in the processing of hormone and other protein precursors at sites comprised of pairs of basic amino acid residues. Substrates include POMC, renin, enkephalin, dynorphin, somatostatin, insulin and AGRP. The chain is Neuroendocrine convertase 1 (Pcsk1) from Rattus norvegicus (Rat).